The following is a 316-amino-acid chain: ATP synthase gamma chain (316 aa).

Belongs to the ATPase gamma chain family. F-type ATPases have 2 components, CF(1) - the catalytic core - and CF(0) - the membrane proton channel. CF(1) has five subunits: alpha(3), beta(3), gamma(1), delta(1), epsilon(1). CF(0) has three main subunits: a, b and c.

It localises to the cellular thylakoid membrane. Produces ATP from ADP in the presence of a proton gradient across the membrane. The gamma chain is believed to be important in regulating ATPase activity and the flow of protons through the CF(0) complex. The protein is ATP synthase gamma chain of Synechococcus elongatus (strain ATCC 33912 / PCC 7942 / FACHB-805) (Anacystis nidulans R2).